The chain runs to 578 residues: Isocitrate dehydrogenase kinase/phosphatase (578 aa).

ATP-binding positions include 315-321 and Lys336; that span reads APGIRGM. Residue Asp371 is part of the active site.

The protein belongs to the AceK family.

The protein localises to the cytoplasm. It catalyses the reaction L-seryl-[isocitrate dehydrogenase] + ATP = O-phospho-L-seryl-[isocitrate dehydrogenase] + ADP + H(+). Its function is as follows. Bifunctional enzyme which can phosphorylate or dephosphorylate isocitrate dehydrogenase (IDH) on a specific serine residue. This is a regulatory mechanism which enables bacteria to bypass the Krebs cycle via the glyoxylate shunt in response to the source of carbon. When bacteria are grown on glucose, IDH is fully active and unphosphorylated, but when grown on acetate or ethanol, the activity of IDH declines drastically concomitant with its phosphorylation. The chain is Isocitrate dehydrogenase kinase/phosphatase from Shigella dysenteriae serotype 1 (strain Sd197).